The primary structure comprises 346 residues: UDP-N-acetylenolpyruvoylglucosamine reductase (346 aa).

The 172-residue stretch at 23 to 194 (FDVRAQFACR…TSVTFRLPKV (172 aa)) folds into the FAD-binding PCMH-type domain. Arg170 is an active-site residue. Ser246 (proton donor) is an active-site residue. Residue Glu342 is part of the active site.

It belongs to the MurB family. Requires FAD as cofactor.

The protein resides in the cytoplasm. It catalyses the reaction UDP-N-acetyl-alpha-D-muramate + NADP(+) = UDP-N-acetyl-3-O-(1-carboxyvinyl)-alpha-D-glucosamine + NADPH + H(+). Its pathway is cell wall biogenesis; peptidoglycan biosynthesis. Functionally, cell wall formation. This Paraburkholderia phytofirmans (strain DSM 17436 / LMG 22146 / PsJN) (Burkholderia phytofirmans) protein is UDP-N-acetylenolpyruvoylglucosamine reductase.